The chain runs to 80 residues: Styelin-C (80 aa).

The N-terminal stretch at 1-22 (MQMKATILIVLVALFMIQQSEA) is a signal peptide. Residue Trp24 is modified to 6'-bromotryptophan. Leu53 carries the post-translational modification Leucine amide. A propeptide spans 55–80 (DMTDEEFQEFMQDIEQAREEELLSRQ) (removed in mature form).

It localises to the secreted. Functionally, bactericidal against several Gram-positive and Gram-negative bacteria. The chain is Styelin-C from Styela clava (Sea squirt).